The sequence spans 204 residues: ATP-dependent Clp protease proteolytic subunit 1 (204 aa).

Ser97 functions as the Nucleophile in the catalytic mechanism. His122 is an active-site residue.

This sequence belongs to the peptidase S14 family. In terms of assembly, fourteen ClpP subunits assemble into 2 heptameric rings which stack back to back to give a disk-like structure with a central cavity, resembling the structure of eukaryotic proteasomes.

Its subcellular location is the cytoplasm. The catalysed reaction is Hydrolysis of proteins to small peptides in the presence of ATP and magnesium. alpha-casein is the usual test substrate. In the absence of ATP, only oligopeptides shorter than five residues are hydrolyzed (such as succinyl-Leu-Tyr-|-NHMec, and Leu-Tyr-Leu-|-Tyr-Trp, in which cleavage of the -Tyr-|-Leu- and -Tyr-|-Trp bonds also occurs).. Its function is as follows. Cleaves peptides in various proteins in a process that requires ATP hydrolysis. Has a chymotrypsin-like activity. Plays a major role in the degradation of misfolded proteins. The protein is ATP-dependent Clp protease proteolytic subunit 1 of Nostoc sp. (strain PCC 7120 / SAG 25.82 / UTEX 2576).